Consider the following 335-residue polypeptide: N-acetyl-gamma-glutamyl-phosphate reductase (335 aa).

C147 is an active-site residue.

Belongs to the NAGSA dehydrogenase family. Type 1 subfamily.

The protein resides in the cytoplasm. It catalyses the reaction N-acetyl-L-glutamate 5-semialdehyde + phosphate + NADP(+) = N-acetyl-L-glutamyl 5-phosphate + NADPH + H(+). It functions in the pathway amino-acid biosynthesis; L-arginine biosynthesis; N(2)-acetyl-L-ornithine from L-glutamate: step 3/4. Its function is as follows. Catalyzes the NADPH-dependent reduction of N-acetyl-5-glutamyl phosphate to yield N-acetyl-L-glutamate 5-semialdehyde. The chain is N-acetyl-gamma-glutamyl-phosphate reductase from Campylobacter hominis (strain ATCC BAA-381 / DSM 21671 / CCUG 45161 / LMG 19568 / NCTC 13146 / CH001A).